We begin with the raw amino-acid sequence, 1588 residues long: Paternally-expressed gene 3 protein (1588 aa).

The 83-residue stretch at 46–128 (HQRFRNLIYV…TLLENYKEMY (83 aa)) folds into the SCAN box domain. Disordered regions lie at residues 128–230 (YQPE…ESYQ), 266–306 (DGHS…RRGI), and 319–349 (KFIK…MSDD). Acidic residues predominate over residues 129–142 (QPEDDNNSDVTSDD). Composition is skewed to basic and acidic residues over residues 143 to 152 (DMTRNRRESS), 161 to 182 (SGDR…DRWS), 206 to 225 (FEMD…RSQD), and 295 to 306 (PEAKKSTHRRGI). C2H2-type zinc fingers lie at residues 454–476 (YVCD…QIMH), 507–529 (FECK…RKIH), and 565–587 (YECR…QKIH). Residues 588–607 (FGDDKDNEREHERERERGET) show a composition bias toward basic and acidic residues. The interval 588-610 (FGDDKDNEREHERERERGETFRP) is disordered. Residues 627–649 (YECKVCGETFLHSSSLKEHQKIH) form a C2H2-type 4 zinc finger. The tract at residues 838–930 (LVASKPPRSH…EFSVPSSNVR (93 aa)) is disordered. The span at 868–881 (LNDKRQKIPARENP) shows a compositional bias: basic and acidic residues. A C2H2-type 5 zinc finger spans residues 969–991 (YECQECGECFAHSSDLTEHQKIH). The disordered stretch occupies residues 1056-1104 (EKSHGEESQGENTDGEETHSEETHGQETIEDPVIQGSDMEDPQKDDPDD). The segment covering 1071–1082 (EETHSEETHGQE) has biased composition (basic and acidic residues). 5 consecutive C2H2-type zinc fingers follow at residues 1107–1129 (YECE…QKVH), 1163–1185 (YECP…QRIH), 1225–1247 (IRCL…MRLH), 1282–1304 (FECA…VTVH), and 1332–1354 (YECK…KELH). Positions 1393–1495 (EAAEPEVEAX…GIEDPEEGED (103 aa)) are disordered. Positions 1395–1415 (AEPEVEAXEPEVEAAEPEVEA) are enriched in acidic residues. 7 tandem repeats follow at residues 1397–1403 (PEVEAXE), 1404–1410 (PEVEAAE), 1411–1417 (PEVEAAE), 1418–1422 (PNGEA), 1425–1429 (PDGEA), 1432–1436 (PIGEA), and 1439–1443 (PNGEA). The interval 1397–1417 (PEVEAXEPEVEAAEPEVEAAE) is 3 X 7 AA repeat of P-E-V-E-A-A-E. The 4 X 5 AA repeat of P-X-G-E-A stretch occupies residues 1418–1443 (PNGEAEGPDGEAAEPIGEAGQPNGEA). Composition is skewed to acidic residues over residues 1449-1466 (DADE…ERAE) and 1475-1495 (PEGD…EGED). 2 C2H2-type zinc fingers span residues 1505-1527 (YDCH…LKTH) and 1564-1586 (FKCD…QNTH).

Belongs to the krueppel C2H2-type zinc-finger protein family. In terms of assembly, homodimer. Interacts with SIAH1A and SIAH2. Interacts with TRAF2.

Its subcellular location is the nucleus. It is found in the cytoplasm. Induces apoptosis in cooperation with SIAH1A. Acts as a mediator between p53/TP53 and BAX in a neuronal death pathway that is activated by DNA damage. Acts synergistically with TRAF2 and inhibits TNF induced apoptosis through activation of NF-kappa-B. This chain is Paternally-expressed gene 3 protein (PEG3), found in Pan paniscus (Pygmy chimpanzee).